Here is a 417-residue protein sequence, read N- to C-terminus: Phosphatidylcholine:ceramide cholinephosphotransferase 1 (417 aa).

The 64-residue stretch at 11–74 folds into the SAM domain; it reads WSPEEVTNWL…LHMIETLKMA (64 aa). The next 5 membrane-spanning stretches (helical) occupy residues 140 to 160, 188 to 208, 219 to 239, 280 to 300, and 308 to 328; these read FLAF…ISVV, FSIC…QWLL, FFCI…VTTL, MCGD…YLFI, and LWWY…CILL. The active site involves His289. Residues 329 to 417 lie on the Cytoplasmic side of the membrane; it reads AHDHYTVDVV…VKYSRLVNDT (89 aa). Residues His332 and Asp336 contribute to the active site.

This sequence belongs to the sphingomyelin synthase family.

It localises to the golgi apparatus membrane. It carries out the reaction an N-acylsphing-4-enine + a 1,2-diacyl-sn-glycero-3-phosphocholine = a sphingomyelin + a 1,2-diacyl-sn-glycerol. It catalyses the reaction an N-acylsphing-4-enine + a 1,2-diacyl-sn-glycero-3-phosphoethanolamine = an N-acylsphing-4-enine 1-phosphoethanolamine + a 1,2-diacyl-sn-glycerol. Major sphingomyelin synthase at the Golgi apparatus. Catalyzes the reversible transfer of phosphocholine moiety in sphingomyelin biosynthesis: in the forward reaction transfers phosphocholine head group of phosphatidylcholine (PC) on to ceramide (CER) to form ceramide phosphocholine (sphingomyelin, SM) and diacylglycerol (DAG) as by-product, and in the reverse reaction transfers phosphocholine from SM to DAG to form PC and CER. The direction of the reaction depends on the levels of CER and DAG in Golgi membranes. Converts the newly synthesized CER, that is transported from the endoplasmic reticulum to the trans-Golgi by the Cer transport protein (CERT), to SM. Can form a heteromeric complex with glucosylceramide synthase (GCS) increasing SMS activity and reducing glucosylceramide synthesis, a critical mechanism that controls the metabolic fate of CER in the Golgi. Does not use free phosphorylcholine or CDP-choline as donor. Can also transfer phosphoethanolamine head group of phosphatidylethanolamine (PE) on to CER to form ceramide phosphoethanolamine (CPE). Regulates receptor-mediated signal transduction via mitogenic DAG and proapoptotic CER, as well as via SM, a structural component of membrane rafts that serve as platforms for signal transduction and protein sorting. Plays a role in secretory transport via regulation of DAG pool at the Golgi apparatus and its downstream effects on PRKD1. The sequence is that of Phosphatidylcholine:ceramide cholinephosphotransferase 1 (SGMS1) from Gallus gallus (Chicken).